The primary structure comprises 367 residues: Peptide chain release factor 1 (367 aa).

N5-methylglutamine is present on glutamine 238.

It belongs to the prokaryotic/mitochondrial release factor family. Post-translationally, methylated by PrmC. Methylation increases the termination efficiency of RF1.

The protein resides in the cytoplasm. Its function is as follows. Peptide chain release factor 1 directs the termination of translation in response to the peptide chain termination codons UAG and UAA. This is Peptide chain release factor 1 from Dictyoglomus turgidum (strain DSM 6724 / Z-1310).